Here is a 383-residue protein sequence, read N- to C-terminus: S-adenosylmethionine synthase 1 (383 aa).

Position 15 (His15) interacts with ATP. Asp17 lines the Mg(2+) pocket. Position 43 (Glu43) interacts with K(+). Residues Glu56 and Gln99 each contribute to the L-methionine site. The flexible loop stretch occupies residues 99–109; that stretch reads QSPDINLGVSR. ATP contacts are provided by residues 162-164, 228-229, Asp237, 243-244, Ala260, and Lys264; these read DGK, RF, and RK. Residue Asp237 participates in L-methionine binding. Position 268 (Lys268) interacts with L-methionine.

The protein belongs to the AdoMet synthase family. As to quaternary structure, homotetramer; dimer of dimers. It depends on Mg(2+) as a cofactor. Requires K(+) as cofactor.

The protein localises to the cytoplasm. It carries out the reaction L-methionine + ATP + H2O = S-adenosyl-L-methionine + phosphate + diphosphate. Its pathway is amino-acid biosynthesis; S-adenosyl-L-methionine biosynthesis; S-adenosyl-L-methionine from L-methionine: step 1/1. Its function is as follows. Catalyzes the formation of S-adenosylmethionine (AdoMet) from methionine and ATP. The overall synthetic reaction is composed of two sequential steps, AdoMet formation and the subsequent tripolyphosphate hydrolysis which occurs prior to release of AdoMet from the enzyme. This chain is S-adenosylmethionine synthase 1, found in Rhodopseudomonas palustris (strain BisB18).